We begin with the raw amino-acid sequence, 413 residues long: Gamma-DL-glutamyl hydrolase (413 aa).

A signal peptide spans 1–32 (MNTLANWKKFLLVAVIICFLVPIMTKAEIAEA). NlpC/P60 domains are found at residues 33–159 (DTSS…RRIA), 163–287 (ATAD…RRFD), and 291–413 (IPKE…IRVQ). The active-site Nucleophile is the Cys194. His247 serves as the catalytic Proton acceptor. The active site involves Gln259.

The protein belongs to the peptidase C40 family.

It localises to the secreted. It is found in the cell wall. Its activity is regulated as follows. Inhibited by pretreatment with 1 mM 4-(hydroxymercuri)benzoate, a sulfhydryl inhibitor. In terms of biological role, cleaves, in an endo-type manner, the gamma-glutamyl bond between D-glutamate and L-glutamate of poly-gamma-glutamate (PGA). The chain is Gamma-DL-glutamyl hydrolase (pgdS) from Bacillus subtilis (strain 168).